We begin with the raw amino-acid sequence, 339 residues long: Histidine protein methyltransferase 1 (339 aa).

Phosphoserine occurs at positions 333 and 338.

This sequence belongs to the methyltransferase superfamily. METTL18 family.

The protein localises to the cytoplasm. Its subcellular location is the nucleus. The catalysed reaction is L-histidyl-[protein] + S-adenosyl-L-methionine = N(tele)-methyl-L-histidyl-[protein] + S-adenosyl-L-homocysteine + H(+). In terms of biological role, protein-histidine N-methyltransferase that mediates methylation of target protein on His residues. In Schizosaccharomyces pombe (strain 972 / ATCC 24843) (Fission yeast), this protein is Histidine protein methyltransferase 1.